Consider the following 194-residue polypeptide: Large ribosomal subunit protein bL25 (194 aa).

This sequence belongs to the bacterial ribosomal protein bL25 family. CTC subfamily. As to quaternary structure, part of the 50S ribosomal subunit; part of the 5S rRNA/L5/L18/L25 subcomplex. Contacts the 5S rRNA. Binds to the 5S rRNA independently of L5 and L18.

In terms of biological role, this is one of the proteins that binds to the 5S RNA in the ribosome where it forms part of the central protuberance. The sequence is that of Large ribosomal subunit protein bL25 from Geobacter sulfurreducens (strain ATCC 51573 / DSM 12127 / PCA).